Here is a 160-residue protein sequence, read N- to C-terminus: Small ribosomal subunit protein uS9 (160 aa).

It belongs to the universal ribosomal protein uS9 family.

This chain is Small ribosomal subunit protein uS9, found in Mesorhizobium japonicum (strain LMG 29417 / CECT 9101 / MAFF 303099) (Mesorhizobium loti (strain MAFF 303099)).